The chain runs to 80 residues: Styelin-C (80 aa).

The first 22 residues, 1–22 (MQMKATILIVLVALFMIQQSEA), serve as a signal peptide directing secretion. Trp24 is modified (6'-bromotryptophan). A Leucine amide modification is found at Leu53. The propeptide at 55–80 (DMTDEEFQEFMQDIEQAREEELLSRQ) is removed in mature form.

The protein localises to the secreted. Bactericidal against several Gram-positive and Gram-negative bacteria. The protein is Styelin-C of Styela clava (Sea squirt).